A 597-amino-acid chain; its full sequence is MPCIQAQYGTPATSPGPRDHLTGDPLALEFSKPTMDLASPETAPTAPATLPSFSTFMDGGYTGEFDTFLYQLPGTAQPCSSASSTSSSSSSATSPASASFKFEDFQVYGCYPGTLSGPLDETLSSSGSDYYGSPCSAPSPPTPNFQPSQLSPWDGSFGHFSPSQTYEGLRVWTEQLPKASGPPPPPTFFSFSPPTGPSPSLAQSSLKLFPAPATHQLGEGESYSVPAAFPGLAPTSPNCDTSGILDAPVTSTKARSGSSGGSEGRCAVCGDNASCQHYGVRTCEGCKGFFKRTVQKSAKYICLANKDCPVDKRRRNRCQFCRFQKCLAVGMVKEVVRTDSLKGRRGRLPSKPKQPPDASPTNLLTSLIRAHLDSGPNTAKLDYSKFQELVLPRFGKEDAGDVQQFYDLLSGSLDVIRKWAEKIPGFIELSPGDQDLLLESAFLELFILRLAYRSKPGEGKLIFCSGLVLHRLQCARGFGDWIDNILAFSRSLHSLGVDVPAFACLSALVLITDRHGLQDPRRVEELQNRIASCLKEHMAAVAGDPQPASCLSRLLGKLPELRTLCTQGLQRIFCLKLEDLVPPPPIVDKIFMDTLSF.

Residues 1–22 (MPCIQAQYGTPATSPGPRDHLT) form a disordered region. The interval 170 to 465 (RVWTEQLPKA…PGEGKLIFCS (296 aa)) is required for nuclear import. Positions 263–338 (EGRCAVCGDN…VGMVKEVVRT (76 aa)) form a DNA-binding region, nuclear receptor. 2 NR C4-type zinc fingers span residues 266 to 286 (CAVC…CEGC) and 302 to 326 (CLAN…FQKC). The interval 267 to 353 (AVCGDNASCQ…RRGRLPSKPK (87 aa)) is required for binding NBRE-containing DNA. Residues 298–360 (AKYICLANKD…KPKQPPDASP (63 aa)) form a required for the interaction with RXRA region. Serine 340 carries the post-translational modification Phosphoserine; by PKA. Residues 341–360 (LKGRRGRLPSKPKQPPDASP) form a disordered region. Serine 350 carries the phosphoserine; by PKA, RPS6KA1 and RPS6KA3 modification. In terms of domain architecture, NR LBD spans 359-594 (SPTNLLTSLI…PIVDKIFMDT (236 aa)). The segment at 520 to 543 (PRRVEELQNRIASCLKEHMAAVAG) is binds lipopolysaccharide. The AF-2 stretch occupies residues 583–594 (PPPIVDKIFMDT).

Belongs to the nuclear hormone receptor family. NR4 subfamily. In terms of assembly, binds the NGFI-B response element (NBRE) as a monomer. Binds the Nur response element (NurRE), consisting of two inverse NBRE-related octanucleotide repeats separated by 6 base-pairs, as a dimer. Interacts (via N-terminus) with NLRP3 (via LRR repeat domain); the interaction is direct, requires binding of NR4A1/Nur77 to NBRE-containing dsDNA and lipopolysaccharide, and leads to non-canonical NLRP3 inflammasome activation. Interacts with GADD45GIP1. Interacts with STK11. Interacts with IFI27. Heterodimer (via DNA-binding domain) with RXRA (via C-terminus); DNA-binding of the heterodimer is enhanced by 9-cis retinoic acid. Competes for the RXRA interaction with EP300 and thereby attenuates EP300 mediated acetylation of RXRA. Interacts with NCOA1. Interacts with NCOA2. Interacts with NCOA3. The cofactor is Zn(2+). Post-translationally, phosphorylated at Ser-350 by RPS6KA1 and RPS6KA3 in response to mitogenic or stress stimuli. Phosphorylation of Ser-350 results in decrease in NBRE binding while phosphorylation of Ser-340 has little effect on it. Acetylated by p300/CBP, acetylation increases stability. Deacetylated by HDAC1. As to expression, expressed in lung, brain and superior cervical ganglia. High levels are seen in the adrenal tissue.

The protein resides in the nucleus. Its subcellular location is the cytoplasm. It localises to the cytosol. It is found in the mitochondrion. Orphan nuclear receptor. Binds the NGFI-B response element (NBRE) 5'-AAAGGTCA-3'. Binds 9-cis-retinoic acid outside of its ligand-binding (NR LBD) domain. Participates in energy homeostasis by sequestrating the kinase STK11 in the nucleus, thereby attenuating cytoplasmic AMPK activation. Regulates the inflammatory response in macrophages by regulating metabolic adaptations during inflammation, including repressing the transcription of genes involved in the citric acid cycle (TCA). Inhibits NF-kappa-B signaling by binding to low-affinity NF-kappa-B binding sites, such as at the IL2 promoter. May act concomitantly with NR4A2 in regulating the expression of delayed-early genes during liver regeneration. Plays a role in the vascular response to injury. Functionally, in the cytosol, upon its detection of both bacterial lipopolysaccharide (LPS) and NBRE-containing mitochondrial DNA released by GSDMD pores during pyroptosis, it promotes non-canonical NLRP3 inflammasome activation by stimulating association of NLRP3 and NEK7. The protein is Nuclear receptor subfamily 4 group A member 1 (Nr4a1) of Rattus norvegicus (Rat).